Consider the following 360-residue polypeptide: Transcription factor MYB39 (360 aa).

HTH myb-type domains follow at residues 10–62 and 63–117; these read DKGV…MNYL and RPDI…RKKL. 2 DNA-binding regions (H-T-H motif) span residues 38–62 and 90–113; these read WRSLPKLAGLNRCGKSCRLRWMNYL and WSKIAGHLPGRTDNEIKNYWNTHM. Positions 299-324 are disordered; sequence PSTGSVSVSPETTSLNHPSTAQHSSG.

Its subcellular location is the nucleus. This is Transcription factor MYB39 (MYB39) from Arabidopsis thaliana (Mouse-ear cress).